A 227-amino-acid polypeptide reads, in one-letter code: Protein rapunzel (227 aa).

A helical membrane pass occupies residues 179–196 (LAYLFCIGFIALMGYYGI).

The protein resides in the membrane. The sequence is that of Protein rapunzel from Danio rerio (Zebrafish).